Consider the following 537-residue polypeptide: Extracellular exo-inulinase inuE (537 aa).

An N-terminal signal peptide occupies residues 1-19; that stretch reads MARLLKAVTVCALAGIAHA. The active site involves Asp41. 8 N-linked (GlcNAc...) asparagine glycosylation sites follow: Asn49, Asn67, Asn112, Asn300, Asn363, Asn398, Asn430, and Asn531.

Belongs to the glycosyl hydrolase 32 family.

It localises to the secreted. It carries out the reaction Hydrolysis of terminal, non-reducing (2-&gt;1)- and (2-&gt;6)-linked beta-D-fructofuranose residues in fructans.. Its activity is regulated as follows. The catalytic activity is increased by manganese cathions, but strongly inhibited by other metal ions such as copper, aluminum, silver, iron, nickel, zinc and magnesium cathions. Exo-inulinase involved in utilization of the plant storage polymer inulin, consisting of fructooligosaccharides with a degree of polymerization (DP) value from 2 to 60. Splits off terminal fructose units successively from the non-reducing end of the inulin molecule, and also hydrolyze sucrose and raffinose. In Aspergillus ficuum, this protein is Extracellular exo-inulinase inuE (exoI).